A 686-amino-acid chain; its full sequence is Delta-like protein 4 (686 aa).

The N-terminal stretch at 1–26 is a signal peptide; it reads MTPASRSACRWALLLLAVLWPQQRAA. Residues 27–532 are Extracellular-facing; the sequence is GSGIFQLRLQ…GLPPSFPWVA (506 aa). 2 disulfide bridges follow: cysteine 51–cysteine 55 and cysteine 62–cysteine 75. 3 N-linked (GlcNAc...) asparagine glycosylation sites follow: asparagine 79, asparagine 109, and asparagine 162. The DSL domain maps to 174–218; it reads VICSDNYYGESCSRLCKKRDDHFGHYECQPDGSLSCLPGWTGKYC. Cysteine 176 and cysteine 185 are oxidised to a cystine. 2 interaction with Notch1 regions span residues 186-188 and 192-196; these read SRL and RDDHF. 26 cysteine pairs are disulfide-bonded: cysteine 189/cysteine 201, cysteine 209/cysteine 218, cysteine 223/cysteine 234, cysteine 227/cysteine 240, cysteine 242/cysteine 251, cysteine 254/cysteine 265, cysteine 260/cysteine 271, cysteine 273/cysteine 282, cysteine 289/cysteine 301, cysteine 295/cysteine 311, cysteine 313/cysteine 322, cysteine 329/cysteine 340, cysteine 334/cysteine 349, cysteine 351/cysteine 360, cysteine 367/cysteine 378, cysteine 372/cysteine 389, cysteine 391/cysteine 400, cysteine 407/cysteine 418, cysteine 412/cysteine 427, cysteine 429/cysteine 438, cysteine 445/cysteine 456, cysteine 450/cysteine 465, cysteine 467/cysteine 476, cysteine 485/cysteine 496, cysteine 490/cysteine 507, and cysteine 509/cysteine 518. EGF-like domains follow at residues 219-252, 253-283, 285-323, 325-361, 364-401, 403-439, 441-477, and 481-519; these read DQPI…RLCN, ECIP…LFCD, DLNY…EHCE, GLSK…QHCE, TLTC…SNCE, KVDR…THCE, HISD…RRCE, and THDA…SRCE. Asparagine 297 carries N-linked (GlcNAc...) asparagine glycosylation. Residue asparagine 394 is glycosylated (N-linked (GlcNAc...) asparagine). The chain crosses the membrane as a helical span at residues 533–553; it reads VSLGVGLVVLLVLLVMVVVAV. The Cytoplasmic segment spans residues 554-686; sequence RQLRLRRPDD…RNECVIATEV (133 aa).

Interacts with NOTCH4. Interacts (via N-terminal DSL and MNNL domains) with NOTCH1 (via EGF-like domains). Expressed in vascular endothelium. Expressed in retina at least during embryogenesis.

The protein resides in the cell membrane. Involved in the Notch signaling pathway as Notch ligand. Activates NOTCH1 and NOTCH4. Involved in angiogenesis; negatively regulates endothelial cell proliferation and migration and angiogenic sprouting. Essential for retinal progenitor proliferation. Required for suppressing rod fates in late retinal progenitors as well as for proper generation of other retinal cell types. During spinal cord neurogenesis, inhibits V2a interneuron fate. The chain is Delta-like protein 4 (Dll4) from Mus musculus (Mouse).